The primary structure comprises 275 residues: Putative ribonuclease-like protein YfkH (275 aa).

Transmembrane regions (helical) follow at residues 23–43 (LAYF…TLTA), 83–103 (LLSF…NAIV), 126–146 (IFLT…PVFG), 172–192 (WGVS…IAPN), 199–219 (FVMP…TLFS), and 235–255 (IGGI…IILG).

Its subcellular location is the cell membrane. The protein is Putative ribonuclease-like protein YfkH (yfkH) of Bacillus subtilis (strain 168).